The chain runs to 344 residues: Methionine import ATP-binding protein MetN (344 aa).

Residues 2–241 form the ABC transporter domain; the sequence is IEINQVNKVF…PKTELAHDFI (240 aa). 38–45 is a binding site for ATP; it reads GSSGAGKS.

The protein belongs to the ABC transporter superfamily. Methionine importer (TC 3.A.1.24) family. As to quaternary structure, the complex is composed of two ATP-binding proteins (MetN), two transmembrane proteins (MetI) and a solute-binding protein (MetQ).

The protein localises to the cell inner membrane. It catalyses the reaction L-methionine(out) + ATP + H2O = L-methionine(in) + ADP + phosphate + H(+). It carries out the reaction D-methionine(out) + ATP + H2O = D-methionine(in) + ADP + phosphate + H(+). Its function is as follows. Part of the ABC transporter complex MetNIQ involved in methionine import. Responsible for energy coupling to the transport system. This chain is Methionine import ATP-binding protein MetN, found in Vibrio vulnificus (strain YJ016).